We begin with the raw amino-acid sequence, 218 residues long: Dynein axonemal assembly factor 6 (218 aa).

Residues 66-103 (MGPGNIGPPKAKESKAIPEPRSDESENIWNPEEVPEGA) form a disordered region. The span at 75 to 89 (KAKESKAIPEPRSDE) shows a compositional bias: basic and acidic residues.

It belongs to the PIH1 family. Interacts with HSPA1A/B, HSP90AA1 and DNAI2. Interacts with DNAAF2 and DNAAF4. Specifically expressed in testis. Detected in pachytene spermatocytes from 5 weeks of age and in pachytene and diplotene spermatocytes of adult mice. Not detected in spermatids or mature sperm.

Its subcellular location is the cytoplasm. The protein localises to the golgi apparatus. The protein resides in the trans-Golgi network. Its function is as follows. Plays a role in cytoplasmic pre-assembly of axonemal dynein. The polypeptide is Dynein axonemal assembly factor 6 (Mus musculus (Mouse)).